We begin with the raw amino-acid sequence, 57 residues long: UPF0509 protein YciZ (57 aa).

The protein belongs to the UPF0509 family.

The chain is UPF0509 protein YciZ (yciZ) from Escherichia coli O157:H7.